We begin with the raw amino-acid sequence, 310 residues long: Methionyl-tRNA formyltransferase (310 aa).

(6S)-5,6,7,8-tetrahydrofolate is bound at residue 109–112 (SLLP).

It belongs to the Fmt family.

The catalysed reaction is L-methionyl-tRNA(fMet) + (6R)-10-formyltetrahydrofolate = N-formyl-L-methionyl-tRNA(fMet) + (6S)-5,6,7,8-tetrahydrofolate + H(+). Functionally, attaches a formyl group to the free amino group of methionyl-tRNA(fMet). The formyl group appears to play a dual role in the initiator identity of N-formylmethionyl-tRNA by promoting its recognition by IF2 and preventing the misappropriation of this tRNA by the elongation apparatus. The chain is Methionyl-tRNA formyltransferase from Pseudomonas putida (strain GB-1).